The sequence spans 938 residues: Bifunctional glutamine synthetase adenylyltransferase/adenylyl-removing enzyme (938 aa).

The adenylyl removase stretch occupies residues 1–457 (MLEADAARLK…HFDHVFGDPS (457 aa)). Residues 460–938 (AHTLDSMWAA…ALWTIVFGSA (479 aa)) form an adenylyl transferase region.

The protein belongs to the GlnE family. It depends on Mg(2+) as a cofactor.

The catalysed reaction is [glutamine synthetase]-O(4)-(5'-adenylyl)-L-tyrosine + phosphate = [glutamine synthetase]-L-tyrosine + ADP. The enzyme catalyses [glutamine synthetase]-L-tyrosine + ATP = [glutamine synthetase]-O(4)-(5'-adenylyl)-L-tyrosine + diphosphate. Functionally, involved in the regulation of glutamine synthetase GlnA, a key enzyme in the process to assimilate ammonia. When cellular nitrogen levels are high, the C-terminal adenylyl transferase (AT) inactivates GlnA by covalent transfer of an adenylyl group from ATP to specific tyrosine residue of GlnA, thus reducing its activity. Conversely, when nitrogen levels are low, the N-terminal adenylyl removase (AR) activates GlnA by removing the adenylyl group by phosphorolysis, increasing its activity. The regulatory region of GlnE binds the signal transduction protein PII (GlnB) which indicates the nitrogen status of the cell. The polypeptide is Bifunctional glutamine synthetase adenylyltransferase/adenylyl-removing enzyme (Aromatoleum aromaticum (strain DSM 19018 / LMG 30748 / EbN1) (Azoarcus sp. (strain EbN1))).